A 160-amino-acid chain; its full sequence is S-ribosylhomocysteine lyase (160 aa).

Fe cation is bound by residues H57, H61, and C127.

This sequence belongs to the LuxS family. In terms of assembly, homodimer. It depends on Fe cation as a cofactor.

The enzyme catalyses S-(5-deoxy-D-ribos-5-yl)-L-homocysteine = (S)-4,5-dihydroxypentane-2,3-dione + L-homocysteine. Involved in the synthesis of autoinducer 2 (AI-2) which is secreted by bacteria and is used to communicate both the cell density and the metabolic potential of the environment. The regulation of gene expression in response to changes in cell density is called quorum sensing. Catalyzes the transformation of S-ribosylhomocysteine (RHC) to homocysteine (HC) and 4,5-dihydroxy-2,3-pentadione (DPD). This is S-ribosylhomocysteine lyase from Streptococcus sanguinis (strain SK36).